A 175-amino-acid polypeptide reads, in one-letter code: MSGNVYKTLLTLLVYGLIMHCNVYCSPDRWTPVPGAKLEEEVYDEDGNTLQDFALRAGAPGGGGPRPRWGRCTALYYPPGKRHADGIFSKAYRKLLGQLSARNYLHSLMAKRVGGASSGLGDEAEPLSKRHIDGIFTDSYSRYRKQMAVKKYLAAVLGKRYKQRVKNKGRRVAYL.

Positions 1–23 (MSGNVYKTLLTLLVYGLIMHCNV) are cleaved as a signal peptide. The propeptide occupies 24-80 (YCSPDRWTPVPGAKLEEEVYDEDGNTLQDFALRAGAPGGGGPRPRWGRCTALYYPPG). An important for receptor binding region spans residues 149–157 (VKKYLAAVL). Residue Leu157 is modified to Leucine amide. The residue at position 168 (Lys168) is a Lysine amide. Residues 172–175 (VAYL) constitute a propeptide that is removed on maturation.

This sequence belongs to the glucagon family.

It localises to the secreted. Its function is as follows. Primary role of GRF is to release GH from the pituitary. PACAP is a neuropeptide involved in diverse array of physiological processes through activating the PACAP subfamily of class B1 G protein-coupled receptors: VIP receptor 1 (VIPR1), VIP receptor 2 (VIPR2), and PACAP type I receptor (ADCYAP1R1). Exerts neuroprotective and general cytoprotective effects due to anti-apoptotic, anti-inflammatory, and antioxidant actions. Promotes neuron projection development through the RAPGEF2/Rap1/B-Raf/ERK pathway. In chromaffin cells, induces long-lasting increase of intracellular calcium concentrations and neuroendocrine secretion. Involved in the control of glucose homeostasis, induces insulin secretion by pancreatic beta cells. PACAP exists in two bioactive forms from proteolysis of the same precursor protein, PACAP27 and PACAP38, which differ by eleven amino acid residues in the C-terminus. The protein is Glucagon family neuropeptides (ADCYAP1) of Gallus gallus (Chicken).